The primary structure comprises 852 residues: Probable inorganic carbon transporter subunit DabA (852 aa).

4 residues coordinate Zn(2+): Cys370, Asp372, His554, and Cys569.

This sequence belongs to the inorganic carbon transporter (TC 9.A.2) DabA family. Forms a complex with DabB. Zn(2+) is required as a cofactor.

The protein resides in the cell inner membrane. Part of an energy-coupled inorganic carbon pump. In Novosphingobium aromaticivorans (strain ATCC 700278 / DSM 12444 / CCUG 56034 / CIP 105152 / NBRC 16084 / F199), this protein is Probable inorganic carbon transporter subunit DabA.